The primary structure comprises 2764 residues: Teneurin-2 (2764 aa).

The 375-residue stretch at 1 to 375 (MDVKDRRHRS…KPSKYCSWKC (375 aa)) folds into the Teneurin N-terminal domain. The Cytoplasmic segment spans residues 1-379 (MDVKDRRHRS…YCSWKCAALS (379 aa)). S90 and S124 each carry phosphoserine. Positions 111–271 (TGSDADSDTE…HHHSSANSLN (161 aa)) are disordered. Residues 141–155 (SSGLSSRENSALTLT) show a composition bias toward polar residues. T155 is subject to Phosphothreonine. S157 carries the post-translational modification Phosphoserine. Residues 159 to 168 (NENKSDDDNG) show a composition bias toward basic and acidic residues. Low complexity predominate over residues 174–188 (TSSSSLLPSAQLPSS). Over residues 202–211 (DSNTSHQIMD) the composition is skewed to polar residues. The span at 229–240 (SGPQQASSSGPP) shows a compositional bias: low complexity. A helical membrane pass occupies residues 380–400 (AIAAALLLAILLAYFIAMHLL). Over 401-2764 (GLNWQLQPAD…FLRQNEMGKR (2364 aa)) the chain is Extracellular. N-linked (GlcNAc...) asparagine glycosylation is found at N443 and N482. EGF-like domains lie at 575-603 (DCPR…ADCA), 598-634 (LGAD…AECD), 636-668 (PMNQ…EHCE), 669-701 (EVDC…NCEL), 702-735 (ARVQ…PDCS), 737-765 (VCSV…AACD), 768-796 (VCHP…EHCT), and 798-831 (DGCP…PGCN). Cystine bridges form between C576–C586, C580–C591, C593–C602, C611–C622, C624–C633, C640–C651, C645–C656, C658–C667, C672–C683, C677–C688, C690–C699, C710–C723, C725–C734, C738–C748, C742–C753, C755–C764, C769–C779, C773–C784, C786–C795, C800–C810, C804–C819, and C821–C830. N-linked (GlcNAc...) asparagine glycans are attached at residues N915, N938, and N1257. NHL repeat units follow at residues 1262–1306 (LELR…VKSL), 1332–1376 (ARCG…NGII), 1391–1442 (LSCD…IAGR), 1464–1491 (LESA…INRL), and 1520–1563 (CYSG…VSKN). A YD 1 repeat occupies 1573–1592 (YEAASPGEQELYVFNADGIH). An N-linked (GlcNAc...) asparagine glycan is attached at N1606. 3 YD repeats span residues 1609–1629 (YSAD…LKIR), 1672–1691 (YDGN…WTTF), and 1692–1714 (YDYD…TSLH). 5 N-linked (GlcNAc...) asparagine glycosylation sites follow: N1702, N1739, N1763, N1797, and N1882. YD repeat units follow at residues 1885-1904 (YFFN…ERTD), 1926-1944 (YLDK…YIFE), 1945-1965 (YDSS…HSMS), 1972-1989 (YIRN…VIFD), 1990-2011 (YSDD…VFYK), 2012-2029 (YGKL…TAVT), 2032-2052 (YDET…FSCT), 2055-2075 (YRKV…EGMI), 2083-2103 (YHDN…TPLP), 2109-2126 (YDEI…GVIY), 2127-2153 (YDIN…IKEV), 2155-2168 (YEMF…MTVQ), 2169-2192 (YDSM…TKYT), 2195-2215 (YDGD…WRYS), 2216-2236 (YDLN…LMPL), 2238-2258 (YDLR…DDDG), 2270-2290 (YNSK…SVQY), and 2292-2312 (YDGV…LQYF). N1983 carries N-linked (GlcNAc...) asparagine glycosylation. N-linked (GlcNAc...) asparagine glycosylation occurs at N2187. N-linked (GlcNAc...) asparagine glycosylation is present at N2327. The YD 23 repeat unit spans residues 2338–2379 (YDLQGHLFAMESSSGEEYYVASDNTGTPLAVYSINGLMIKQL). N2638 carries an N-linked (GlcNAc...) asparagine glycan.

It belongs to the tenascin family. Teneurin subfamily. Homodimer; disulfide-linked. Heterodimer with either TENM1 or TENM3. May also form heterodimer with TENM4. Post-translationally, derives from the membrane form by proteolytic processing. Derives from the plasma membrane form by proteolytic cleavage and translocates to the nucleus. Homophilic binding of the C-terminal extracellular domain stimulates its proteolytic cleavage and release in the cytoplasmic. Is subjected to rapid degradation by the proteasome pathway. As to expression, expressed in the cortex, CA1, CA2, CA3, dentate gyrus and granular layer of the hippocampus. Expressed in the Purkinje cells and molecular layer of the cerebellum.

It is found in the cell membrane. The protein resides in the presynaptic cell membrane. Its subcellular location is the postsynaptic cell membrane. The protein localises to the endoplasmic reticulum. It localises to the golgi apparatus. It is found in the synapse. The protein resides in the cell projection. Its subcellular location is the dendritic spine. The protein localises to the filopodium. It localises to the growth cone. It is found in the nucleus. The protein resides in the PML body. Functionally, involved in neural development, regulating the establishment of proper connectivity within the nervous system. Acts as a ligand of the ADGRL1 and ADGRL3 receptors that are expressed at the surface of adjacent cells. Promotes the formation of filopodia and enlarged growth cone in neuronal cells. Mediates axon guidance and homophilic and heterophilic cell-cell adhesion. May function as a cellular signal transducer. Induces gene transcription inhibition. The protein is Teneurin-2 (Tenm2) of Mus musculus (Mouse).